A 717-amino-acid chain; its full sequence is Adhesion cell surface protein MAD1 (717 aa).

The N-terminal stretch at 1–19 (MKSALSVVVAAAGVQQASA) is a signal peptide. Low complexity-rich tracts occupy residues 237 to 254 (TPVT…QTTT) and 262 to 274 (SKET…QTTP). Disordered regions lie at residues 237–392 (TPVT…ATTT) and 451–506 (RTQS…TPPC). 8 consecutive repeat copies span residues 275–286 (GKETTPAQQTTP), 287–298 (SKETTPVQQTTS), 299–310 (GKETTPAQQTTP), 311–328 (GKET…QTTP), 329–340 (GKETTPAQQTTP), 341–352 (GKETTPAQQTTP), 353–364 (GKETTPAQQTTP), and 365–376 (GKETTPAQQTTP). The span at 275–366 (GKETTPAQQT…TPAQQTTPGK (92 aa)) shows a compositional bias: polar residues. Composition is skewed to low complexity over residues 368–392 (TTPA…ATTT) and 484–503 (QPTG…STQT). Residues 481–595 (TPEQPTGEKP…TQIITVTGTP (115 aa)) enclose the CFEM domain. Disulfide bonds link C513–C546, C524–C532, and C534–C568. Heme is bound at residue D529. A glycan (N-linked (GlcNAc...) asparagine) is linked at N614. A disordered region spans residues 632–690 (PTPTGGVPNQPPATASVPAGQNPPPVTGQNPPPAVTDQSPPPAITTGTGGVIPPKPTGS). Positions 652 to 674 (QNPPPVTGQNPPPAVTDQSPPPA) are enriched in pro residues. A695 carries the GPI-anchor amidated alanine lipid modification. Residues 696–717 (GSGRVGAGLGMVLAVAAFVAAL) constitute a propeptide, removed in mature form.

It belongs to the RBT5 family. The GPI-anchor is attached to the protein in the endoplasmic reticulum and serves to target the protein to the cell surface. There, the glucosamine-inositol phospholipid moiety is cleaved off and the GPI-modified mannoprotein is covalently attached via its lipidless GPI glycan remnant to the 1,6-beta-glucan of the outer cell wall layer.

The protein localises to the secreted. The protein resides in the cell wall. Its subcellular location is the cell membrane. Cell surface adhesion protein that plays a key role in virulence by allowing adherence to the insect host surface. Required to orientate the cytoskeleton and stimulate the expression of genes involved in the cell cycle. Is also involved in achieving the septin hourglass shape and subsequent separation of cells. This is Adhesion cell surface protein MAD1 from Metarhizium anisopliae (Entomophthora anisopliae).